Consider the following 290-residue polypeptide: Phosphatidylserine decarboxylase proenzyme (290 aa).

Active-site charge relay system; for autoendoproteolytic cleavage activity residues include D96, H153, and S257. The Schiff-base intermediate with substrate; via pyruvic acid; for decarboxylase activity role is filled by S257. S257 carries the post-translational modification Pyruvic acid (Ser); by autocatalysis.

Belongs to the phosphatidylserine decarboxylase family. PSD-B subfamily. Prokaryotic type I sub-subfamily. In terms of assembly, heterodimer of a large membrane-associated beta subunit and a small pyruvoyl-containing alpha subunit. Pyruvate serves as cofactor. In terms of processing, is synthesized initially as an inactive proenzyme. Formation of the active enzyme involves a self-maturation process in which the active site pyruvoyl group is generated from an internal serine residue via an autocatalytic post-translational modification. Two non-identical subunits are generated from the proenzyme in this reaction, and the pyruvate is formed at the N-terminus of the alpha chain, which is derived from the carboxyl end of the proenzyme. The autoendoproteolytic cleavage occurs by a canonical serine protease mechanism, in which the side chain hydroxyl group of the serine supplies its oxygen atom to form the C-terminus of the beta chain, while the remainder of the serine residue undergoes an oxidative deamination to produce ammonia and the pyruvoyl prosthetic group on the alpha chain. During this reaction, the Ser that is part of the protease active site of the proenzyme becomes the pyruvoyl prosthetic group, which constitutes an essential element of the active site of the mature decarboxylase.

The protein resides in the cell membrane. It catalyses the reaction a 1,2-diacyl-sn-glycero-3-phospho-L-serine + H(+) = a 1,2-diacyl-sn-glycero-3-phosphoethanolamine + CO2. It functions in the pathway phospholipid metabolism; phosphatidylethanolamine biosynthesis; phosphatidylethanolamine from CDP-diacylglycerol: step 2/2. In terms of biological role, catalyzes the formation of phosphatidylethanolamine (PtdEtn) from phosphatidylserine (PtdSer). The chain is Phosphatidylserine decarboxylase proenzyme from Haemophilus influenzae (strain ATCC 51907 / DSM 11121 / KW20 / Rd).